The following is a 673-amino-acid chain: Probable serine/threonine-protein kinase SCO3848 (673 aa).

Residues 11–277 (YELGPVLGRG…EMRVDIEACL (267 aa)) enclose the Protein kinase domain. Residues 17-25 (LGRGGMAEV) and lysine 40 contribute to the ATP site. The active-site Proton acceptor is the aspartate 138. The segment at 302-345 (DQPTTALRSDGGGGATTMLPPMNPDDGGYGYDERPDRRRQQPRK) is disordered. 4 consecutive PASTA domains span residues 379–445 (GNDK…VVST), 446–511 (GAPK…EVAK), 512–580 (AEEK…VVGK), and 581–649 (AVEK…MTVP). The segment at 472 to 500 (FEVETKQTESSQDEGTILSQNPDPGKELE) is disordered. Polar residues predominate over residues 479-493 (TESSQDEGTILSQNP). 2 disordered regions span residues 613–641 (AQGS…PAAT) and 653–673 (GNGN…GFGD).

The protein belongs to the protein kinase superfamily. Ser/Thr protein kinase family.

The enzyme catalyses L-seryl-[protein] + ATP = O-phospho-L-seryl-[protein] + ADP + H(+). The catalysed reaction is L-threonyl-[protein] + ATP = O-phospho-L-threonyl-[protein] + ADP + H(+). This is Probable serine/threonine-protein kinase SCO3848 from Streptomyces coelicolor (strain ATCC BAA-471 / A3(2) / M145).